We begin with the raw amino-acid sequence, 76 residues long: U1-cyrtautoxin-As1d (76 aa).

Disulfide bonds link Cys-23/Cys-37, Cys-30/Cys-51, Cys-36/Cys-66, and Cys-69/Cys-76.

The protein belongs to the neurotoxin 21 family. In terms of tissue distribution, expressed by the venom gland.

The protein localises to the secreted. Its function is as follows. Neurotoxin with probable ion channel impairing activity. In vivo, is both paralytic and lethal, when injected into lepidopteran larvae. In Apomastus schlingeri (Trap-door spider), this protein is U1-cyrtautoxin-As1d.